The primary structure comprises 685 residues: Protein argonaute (685 aa).

The tract at residues 1 to 99 (MNHLGKTEVF…LYPKGRRPLD (99 aa)) is N-terminal domain. The interval 100-176 (PKDPGERSVL…VDPAYRILCE (77 aa)) is linker L1. The PAZ domain occupies 169-265 (PAYRILCEMS…HLTGLLVPVL (97 aa)). A linker L2 region spans residues 272–337 (EEEGSLALSL…SKPADALRVG (66 aa)). The interval 338-463 (FYRAQETALA…LLAKAGLQVV (126 aa)) is mid domain. Residues 464 to 685 (ALSGAYPAEL…EVDREKLFFV (222 aa)) are PIWI domain. Residues Asp-478, Glu-512, Asp-546, and Asp-660 contribute to the active site. Residue Asp-478 participates in Mn(2+) binding. The 165-residue stretch at 507-671 (EAQAGERIPQ…LVKEVGRLGI (165 aa)) folds into the Piwi domain. Residues Asp-546, Asp-660, and Val-685 each contribute to the Mn(2+) site.

Belongs to the argonaute family. Long pAgo subfamily. Coimmunoprecipitates with a number of proteins involved in DNA replication or recombination including RepA (initiates replication), AddA/B (TT_C0638 and TT_C0639), ArgR, GyrA/B, HU (TT_C0984), PriA, Rad52 (TT_C1923), RecJ, SSB, TopA and UvrB. Most proteins remain associated with TtAgo after DNase treatment and associate with catalytically inactive protein. Mn(2+) serves as cofactor.

Its function is as follows. A DNA-guided ssDNA endonuclease. Uses short ssDNA sequences as guides (gDNA, also called small interfering DNA, siDNA) to bind complementary DNA target strands, resulting in cleavage of the target DNA (tDNA). The cleavage site is 10 nucleotides (nt) downstream of the target residue base-paired with the 5'-end of the gDNA. Plays a role in completion of DNA replication, participates in decatenating replicated DNA and plasmid. In situ purifies with 5'-phosphorylated long DNA (about 1160 nt, maps to the whole chromosome and plasmid), 25-35 nt RNAs that map to the whole chromosome and 15-18 nt DNA that maps to the replication terminus region (ter) on the chromosome and plasmid. Most short DNA starts with dC. Has been shown to have guide sequence-independent dsDNase activity called 'chopping', which requires unstable DNA (high AT-content, multiple mismatches or low salt conditions), and could be used to generate gDNA. Preferentially binds tDNA with dC at its 3'-terminus. Has also been shown to have no detectable guide sequence-independent dsDNase activity. The latter study proposes TtAgo may acquire gDNA from nicked dsDNA, by binding to 5'-phosphorylated-dC nicks, then cleaving 10 nt away on the opposite strand; subsequently an exonuclease (maybe AddA-AddB helicase/nuclease) trims the ends to generate the gDNA. In terms of biological role, involved in defense against invading mobile genetic elements. TtAgo interferes with plasmid DNA, stimulates expression of specific endogenous genes, including various CRISPR loci and at least part of the CRISPR adaptation machinery, but only when exogenous plasmid DNA is present. Upon purification from E.coli associates with gDNA 13-25 nt long with 5'-phosphorylated ends and with 10-150 nt RNA with 5'-OH. DNA corresponds to the expression plasmid rather than chromosomal DNA; 89% of gDNA starts with dC and 72% has dA in the second position. Endonucleolytically cleaves tDNA with 5'-phosphorylated gDNA but not 5'-phosphorylated gRNA; the active site is involved in processing or binding of ssDNA. Nicks or linearizes supercoiled plasmid target when it has the appropriate gDNA sequences, does not cleave linear tDNA. Positions 4 to 16 of the tDNA need to be base paired to the gDNA for efficient tDNA cleavage. Although the system can support single nucleotide insertions in either the gDNA or tDNA, in all cases cleavage activity is reduced, with a wide range of sequence- and position-specific effects. Functionally, first characterized as a DNA-guided RNA endonuclease. Uses gDNA to bind complementary RNA target strands, resulting in cleavage of the target RNA. The cleavage site is 10 nucleotides (nt) downstream of the target residue base-paired with the 5'-end of the guide DNA. The sequence is that of Protein argonaute from Thermus thermophilus (strain ATCC BAA-163 / DSM 7039 / HB27).